Reading from the N-terminus, the 501-residue chain is MTEQVLPDENKLIAERRAKLEHIRANCPANGHPNNFDRKHKAADIQAEFGNNTKEELEGMGIQRSIAGRIMAKRGPFLVIQDVSGRIQAYAGKDVQKDLKATFQGLDIGDIIGVTGQLHLSGKGDLYVNMEEYQLLTKALRPLPEKFHGLTDQETRYRQRYVDLIVNEDSRNAFIMRSKVVSAIRNFMVKKEFMEVETPMMHSIPGGASARPFETHHNALDIAMYLRIAPELYLKRLVVGGFERVFEINRNFRNEGLSPRHNPEFTMMEFYMAYADFNDLMDLTEEMLSSIATELCGSPQLPYGEHTVDFGGPYARLSMLDAIKKYNPDNATIQSMTYEEVKDVEFMRDLAKSLGMTIEKFWTCGQLLEEIFGETAETQLMQPTFITGYPADISPLARRNDDNHFITDRFEFFIGGREVANGFSELNDAEDQDNRFKAQVDAKDAGDDEAMFYDADYITALEHGLPPTAGQGIGIDRLVMLFTNTHTIRDVILFPAMRPQA.

Glu-411 and Glu-418 together coordinate Mg(2+).

Belongs to the class-II aminoacyl-tRNA synthetase family. As to quaternary structure, homodimer. Mg(2+) serves as cofactor.

Its subcellular location is the cytoplasm. The catalysed reaction is tRNA(Lys) + L-lysine + ATP = L-lysyl-tRNA(Lys) + AMP + diphosphate. The polypeptide is Lysine--tRNA ligase (Shewanella woodyi (strain ATCC 51908 / MS32)).